A 301-amino-acid chain; its full sequence is Homoserine O-acetyltransferase (301 aa).

Residue Cys-142 is the Acyl-thioester intermediate of the active site. Residues Lys-163 and Ser-192 each coordinate substrate. Residue His-235 is the Proton acceptor of the active site. The active site involves Glu-237. Arg-249 serves as a coordination point for substrate.

This sequence belongs to the MetA family.

The protein localises to the cytoplasm. It catalyses the reaction L-homoserine + acetyl-CoA = O-acetyl-L-homoserine + CoA. Its pathway is amino-acid biosynthesis; L-methionine biosynthesis via de novo pathway; O-acetyl-L-homoserine from L-homoserine: step 1/1. Functionally, transfers an acetyl group from acetyl-CoA to L-homoserine, forming acetyl-L-homoserine. In Clostridium acetobutylicum (strain ATCC 824 / DSM 792 / JCM 1419 / IAM 19013 / LMG 5710 / NBRC 13948 / NRRL B-527 / VKM B-1787 / 2291 / W), this protein is Homoserine O-acetyltransferase.